The primary structure comprises 319 residues: Probable NAD(P)H-dependent D-xylose reductase xyl1 (319 aa).

The active-site Proton donor is Tyr50. Substrate is bound at residue His112. NAD(+)-binding positions include 166 to 167, 215 to 224, and 271 to 281; these read SN, SSFGPLSFLE, and KSNNPARLLQN.

This sequence belongs to the aldo/keto reductase family.

It carries out the reaction xylitol + NAD(+) = D-xylose + NADH + H(+). It catalyses the reaction xylitol + NADP(+) = D-xylose + NADPH + H(+). The protein operates within carbohydrate metabolism; D-xylose degradation. Catalyzes the initial reaction in the xylose utilization pathway by reducing D-xylose into xylitol. Xylose is a major component of hemicelluloses such as xylan. Most fungi utilize D-xylose via three enzymatic reactions, xylose reductase (XR), xylitol dehydrogenase (XDH), and xylulokinase, to form xylulose 5-phosphate, which enters pentose phosphate pathway. This chain is Probable NAD(P)H-dependent D-xylose reductase xyl1 (xyl1), found in Emericella nidulans (strain FGSC A4 / ATCC 38163 / CBS 112.46 / NRRL 194 / M139) (Aspergillus nidulans).